A 250-amino-acid chain; its full sequence is Galectin-3 (250 aa).

Positions 1–60 (MADNFSLHDALSGSGNPNPQGWPGAWGNQPAGAGGYPGASYPGAYPGQAPPGAYPGQAPP) are disordered. Alanine 2 carries the N-acetylalanine modification. Residues serine 6 and serine 12 each carry the phosphoserine modification. Tandem repeats lie at residues 36 to 44 (YPGASYPGA), 45 to 53 (YPGQAPPGA), and 54 to 62 (YPGQAPPGA). The tract at residues 36–109 (YPGASYPGAY…AYPATGPYGA (74 aa)) is 8 X 9 AA tandem repeats of Y-P-G-X(3)-P-G-A. Residues 38 to 47 (GASYPGAYPG) are compositionally biased toward low complexity. Positions 48–60 (QAPPGAYPGQAPP) are enriched in pro residues. The stretch at 63 to 69 (YPGAPGA) is one 4; approximate repeat. Repeat unit 5 spans residues 70–78 (YPGAPAPGV). The stretch at 79-88 (YPGPPSGPGA) is one 6; approximate repeat. One copy of the 7; approximate repeat lies at 89 to 100 (YPSSGQPSATGA). The 8; approximate repeat unit spans residues 101–109 (YPATGPYGA). The Galectin domain occupies 118-248 (YNLPLPGGVV…DIDLTSASYT (131 aa)). 181-187 (WGREERQ) is a binding site for a beta-D-galactoside. Phosphoserine is present on serine 188. Positions 226 to 241 (KKLNEISKLGISGDID) match the Nuclear export signal motif.

Probably forms homo- or heterodimers. Interacts with DMBT1. Interacts with CD6 and ALCAM. Forms a complex with the ITGA3, ITGB1 and CSPG4. Interacts with LGALS3BP, LYPD3, ZFTRAF1 and UACA. Interacts with TRIM16; this interaction mediates autophagy of damage endomembranes. Interacts with cargo receptor TMED10; the interaction mediates the translocation from the cytoplasm into the ERGIC (endoplasmic reticulum-Golgi intermediate compartment) and thereby secretion. A major expression is found in the colonic epithelium. It is also abundant in the activated macrophages. Expressed in fetal membranes.

Its subcellular location is the cytoplasm. The protein resides in the nucleus. The protein localises to the secreted. Its function is as follows. Galactose-specific lectin which binds IgE. May mediate with the alpha-3, beta-1 integrin the stimulation by CSPG4 of endothelial cells migration. Together with DMBT1, required for terminal differentiation of columnar epithelial cells during early embryogenesis. In the nucleus: acts as a pre-mRNA splicing factor. Involved in acute inflammatory responses including neutrophil activation and adhesion, chemoattraction of monocytes macrophages, opsonization of apoptotic neutrophils, and activation of mast cells. Together with TRIM16, coordinates the recognition of membrane damage with mobilization of the core autophagy regulators ATG16L1 and BECN1 in response to damaged endomembranes. The sequence is that of Galectin-3 from Homo sapiens (Human).